A 91-amino-acid polypeptide reads, in one-letter code: MKKLLSALALAAVVAPVWAATQTVTLSVPGMTCSACPITVKKAISKVDGVSKVDVTFETREAVVTFDDAKTSVQKLTKATEDAGYPSSVKN.

The first 19 residues, 1–19 (MKKLLSALALAAVVAPVWA), serve as a signal peptide directing secretion. The 67-residue stretch at 22–88 (QTVTLSVPGM…ATEDAGYPSS (67 aa)) folds into the HMA domain. Hg(2+) is bound by residues Cys33 and Cys36.

This sequence belongs to the MerP family. In terms of assembly, monomer.

Its subcellular location is the periplasm. Functionally, involved in mercury resistance. Acts as a mercury scavenger that specifically binds to a mercuric ion in the periplasm and probably passes it to the cytoplasmic mercuric reductase MerA via the mercuric transport protein MerT. The chain is Mercuric transport protein periplasmic component from Pseudomonas fluorescens.